The sequence spans 148 residues: Aspartate 1-decarboxylase (148 aa).

The Schiff-base intermediate with substrate; via pyruvic acid role is filled by Ser-25. Residue Ser-25 is modified to Pyruvic acid (Ser). Thr-57 is a substrate binding site. Tyr-58 serves as the catalytic Proton donor. Position 73–75 (73–75 (GAA)) interacts with substrate.

This sequence belongs to the PanD family. Heterooctamer of four alpha and four beta subunits. Pyruvate is required as a cofactor. Post-translationally, is synthesized initially as an inactive proenzyme, which is activated by self-cleavage at a specific serine bond to produce a beta-subunit with a hydroxyl group at its C-terminus and an alpha-subunit with a pyruvoyl group at its N-terminus.

The protein resides in the cytoplasm. The catalysed reaction is L-aspartate + H(+) = beta-alanine + CO2. The protein operates within cofactor biosynthesis; (R)-pantothenate biosynthesis; beta-alanine from L-aspartate: step 1/1. Catalyzes the pyruvoyl-dependent decarboxylation of aspartate to produce beta-alanine. The protein is Aspartate 1-decarboxylase of Rhodococcus opacus (strain B4).